Here is a 275-residue protein sequence, read N- to C-terminus: 3-methyl-2-oxobutanoate hydroxymethyltransferase (275 aa).

Residues aspartate 55 and aspartate 94 each contribute to the Mg(2+) site. Residues 55–56 (DS), aspartate 94, and lysine 123 each bind 3-methyl-2-oxobutanoate. Residue glutamate 125 coordinates Mg(2+). Residue glutamate 192 is the Proton acceptor of the active site.

It belongs to the PanB family. Homodecamer; pentamer of dimers. Requires Mg(2+) as cofactor.

It localises to the cytoplasm. It catalyses the reaction 3-methyl-2-oxobutanoate + (6R)-5,10-methylene-5,6,7,8-tetrahydrofolate + H2O = 2-dehydropantoate + (6S)-5,6,7,8-tetrahydrofolate. The protein operates within cofactor biosynthesis; (R)-pantothenate biosynthesis; (R)-pantoate from 3-methyl-2-oxobutanoate: step 1/2. Its function is as follows. Catalyzes the reversible reaction in which hydroxymethyl group from 5,10-methylenetetrahydrofolate is transferred onto alpha-ketoisovalerate to form ketopantoate. In Halorhodospira halophila (strain DSM 244 / SL1) (Ectothiorhodospira halophila (strain DSM 244 / SL1)), this protein is 3-methyl-2-oxobutanoate hydroxymethyltransferase.